A 207-amino-acid chain; its full sequence is Myosin light chain 6B (207 aa).

A disordered region spans residues 1 to 50 (MPPKKDAPVKKPAGPSISKPAAKSTPGTPLAKAKAEPAAPQAPAKSQEPP). The span at 36-50 (EPAAPQAPAKSQEPP) shows a compositional bias: low complexity. EF-hand domains lie at 63–98 (DQLE…LGQN), 140–175 (GTYE…LGEK), and 175–207 (KMTE…ILSL).

As to quaternary structure, myosin is a hexamer of 2 heavy chains and 4 light chains.

In terms of biological role, regulatory light chain of myosin. Does not bind calcium. The protein is Myosin light chain 6B of Mus musculus (Mouse).